The sequence spans 38 residues: Alpha-amylase (38 aa).

This sequence belongs to the glycosyl hydrolase 13 family. As to quaternary structure, monomer. It depends on Ca(2+) as a cofactor. Requires chloride as cofactor. In terms of tissue distribution, expressed by the venom gland.

It is found in the secreted. It carries out the reaction Endohydrolysis of (1-&gt;4)-alpha-D-glucosidic linkages in polysaccharides containing three or more (1-&gt;4)-alpha-linked D-glucose units.. In Tityus serrulatus (Brazilian scorpion), this protein is Alpha-amylase.